A 662-amino-acid chain; its full sequence is Protein Aster-C (662 aa).

The segment at 1-34 is disordered; it reads MEGAPTVRQVMNEGDSSLATELQEDVEENPSPTV. The 68-residue stretch at 69 to 136 folds into the GRAM domain; it reads EEYRRQFTHL…KNITFMTKEK (68 aa). 2 disordered regions span residues 212-237 and 250-284; these read SIED…EKLS and VSET…LPTL. Over residues 265 to 276 the composition is skewed to basic and acidic residues; the sequence is LGKEESQNEKQT. One can recognise a VASt domain in the interval 326–497; the sequence is HGRLFINRIF…DLLIEESILN (172 aa). Residues 557–577 traverse the membrane as a helical segment; sequence LIVVMSIFVLLLVLLNVTLFL.

The protein resides in the endoplasmic reticulum membrane. It localises to the cell membrane. Its function is as follows. Cholesterol transporter that mediates non-vesicular transport of cholesterol from the plasma membrane (PM) to the endoplasmic reticulum (ER). Contains unique domains for binding cholesterol and the PM, thereby serving as a molecular bridge for the transfer of cholesterol from the PM to the ER. Plays a crucial role in cholesterol homeostasis and has the unique ability to localize to the PM based on the level of membrane cholesterol. In lipid-poor conditions localizes to the ER membrane and in response to excess cholesterol in the PM is recruited to the endoplasmic reticulum-plasma membrane contact sites (EPCS) which is mediated by the GRAM domain. At the EPCS, the sterol-binding VASt/ASTER domain binds to the cholesterol in the PM and facilitates its transfer from the PM to ER. The sequence is that of Protein Aster-C (GRAMD1C) from Pongo abelii (Sumatran orangutan).